The following is an 863-amino-acid chain: Alanine--tRNA ligase (863 aa).

Zn(2+)-binding residues include H552, H556, C654, and H658.

This sequence belongs to the class-II aminoacyl-tRNA synthetase family. Zn(2+) serves as cofactor.

The protein localises to the cytoplasm. It carries out the reaction tRNA(Ala) + L-alanine + ATP = L-alanyl-tRNA(Ala) + AMP + diphosphate. Its function is as follows. Catalyzes the attachment of alanine to tRNA(Ala) in a two-step reaction: alanine is first activated by ATP to form Ala-AMP and then transferred to the acceptor end of tRNA(Ala). Also edits incorrectly charged Ser-tRNA(Ala) and Gly-tRNA(Ala) via its editing domain. The chain is Alanine--tRNA ligase from Halorhodospira halophila (strain DSM 244 / SL1) (Ectothiorhodospira halophila (strain DSM 244 / SL1)).